We begin with the raw amino-acid sequence, 504 residues long: ATP synthase subunit alpha (504 aa).

172-179 contacts ATP; it reads GDRQTGKT.

This sequence belongs to the ATPase alpha/beta chains family. As to quaternary structure, F-type ATPases have 2 components, CF(1) - the catalytic core - and CF(0) - the membrane proton channel. CF(1) has five subunits: alpha(3), beta(3), gamma(1), delta(1), epsilon(1). CF(0) has three main subunits: a(1), b(2) and c(9-12). The alpha and beta chains form an alternating ring which encloses part of the gamma chain. CF(1) is attached to CF(0) by a central stalk formed by the gamma and epsilon chains, while a peripheral stalk is formed by the delta and b chains.

Its subcellular location is the cell inner membrane. It carries out the reaction ATP + H2O + 4 H(+)(in) = ADP + phosphate + 5 H(+)(out). Its function is as follows. Produces ATP from ADP in the presence of a proton gradient across the membrane. The alpha chain is a regulatory subunit. The polypeptide is ATP synthase subunit alpha (Petrotoga mobilis (strain DSM 10674 / SJ95)).